The chain runs to 261 residues: tRNA pseudouridine synthase A (261 aa).

The Nucleophile role is filled by D53. Y111 lines the substrate pocket.

It belongs to the tRNA pseudouridine synthase TruA family. In terms of assembly, homodimer.

It carries out the reaction uridine(38/39/40) in tRNA = pseudouridine(38/39/40) in tRNA. Its function is as follows. Formation of pseudouridine at positions 38, 39 and 40 in the anticodon stem and loop of transfer RNAs. The sequence is that of tRNA pseudouridine synthase A from Shouchella clausii (strain KSM-K16) (Alkalihalobacillus clausii).